The primary structure comprises 424 residues: Serine--tRNA ligase (424 aa).

229–231 (TAE) contacts L-serine. Residue 260-262 (RRE) participates in ATP binding. Glutamate 283 contributes to the L-serine binding site. ATP is bound at residue 347–350 (EVSS). Serine 383 is a binding site for L-serine.

This sequence belongs to the class-II aminoacyl-tRNA synthetase family. Type-1 seryl-tRNA synthetase subfamily. As to quaternary structure, homodimer. The tRNA molecule binds across the dimer.

It localises to the cytoplasm. The enzyme catalyses tRNA(Ser) + L-serine + ATP = L-seryl-tRNA(Ser) + AMP + diphosphate + H(+). It catalyses the reaction tRNA(Sec) + L-serine + ATP = L-seryl-tRNA(Sec) + AMP + diphosphate + H(+). Its pathway is aminoacyl-tRNA biosynthesis; selenocysteinyl-tRNA(Sec) biosynthesis; L-seryl-tRNA(Sec) from L-serine and tRNA(Sec): step 1/1. Functionally, catalyzes the attachment of serine to tRNA(Ser). Is also able to aminoacylate tRNA(Sec) with serine, to form the misacylated tRNA L-seryl-tRNA(Sec), which will be further converted into selenocysteinyl-tRNA(Sec). This Roseiflexus sp. (strain RS-1) protein is Serine--tRNA ligase.